The sequence spans 183 residues: Casparian strip membrane protein 2 (183 aa).

The Cytoplasmic segment spans residues 1–23 (MDSGEQGETSKAPLNKGVSRGVS). A helical membrane pass occupies residues 24-44 (ILDLILRVIAVISTLASAIAM). The Extracellular portion of the chain corresponds to 45-71 (GTTNETLPLFTPFIQFKARYSDLPALT). Asn-48 is a glycosylation site (N-linked (GlcNAc...) asparagine). The chain crosses the membrane as a helical span at residues 72-92 (FFVVANSIVSAYLILSLPLSI). The Cytoplasmic portion of the chain corresponds to 93–104 (AHIIRSGAKYSR). Residues 105 to 125 (LVLIIFDAAMLALVTAASSAA) traverse the membrane as a helical segment. Over 126 to 158 (TAIVYLAHKGNVRANWLAICQQLDSFCERTSGS) the chain is Extracellular. A helical transmembrane segment spans residues 159-179 (LVGSFGAMVLLILLILLSAMA). Topologically, residues 180 to 183 (LARR) are cytoplasmic.

It belongs to the Casparian strip membrane proteins (CASP) family. In terms of assembly, homodimer and heterodimers.

The protein resides in the cell membrane. Its function is as follows. Regulates membrane-cell wall junctions and localized cell wall deposition. Required for establishment of the Casparian strip membrane domain (CSD) and the subsequent formation of Casparian strips, a cell wall modification of the root endodermis that determines an apoplastic barrier between the intraorganismal apoplasm and the extraorganismal apoplasm and prevents lateral diffusion. This Triticum aestivum (Wheat) protein is Casparian strip membrane protein 2.